A 324-amino-acid chain; its full sequence is Tubulin alpha-8 chain (324 aa).

GTP is bound by residues Ser-15, Gly-19, Thr-20, Thr-54, Asn-81, and Asn-103. The active site involves Glu-129.

The protein belongs to the tubulin family. Dimer of alpha and beta chains. A typical microtubule is a hollow water-filled tube with an outer diameter of 25 nm and an inner diameter of 15 nM. Alpha-beta heterodimers associate head-to-tail to form protofilaments running lengthwise along the microtubule wall with the beta-tubulin subunit facing the microtubule plus end conferring a structural polarity. Microtubules usually have 13 protofilaments but different protofilament numbers can be found in some organisms and specialized cells. Mg(2+) serves as cofactor. Some glutamate residues at the C-terminus are polyglycylated, resulting in polyglycine chains on the gamma-carboxyl group. Glycylation is mainly limited to tubulin incorporated into axonemes (cilia and flagella) whereas glutamylation is prevalent in neuronal cells, centrioles, axonemes, and the mitotic spindle. Both modifications can coexist on the same protein on adjacent residues, and lowering polyglycylation levels increases polyglutamylation, and reciprocally. The precise function of polyglycylation is still unclear. In terms of processing, some glutamate residues at the C-terminus are polyglutamylated, resulting in polyglutamate chains on the gamma-carboxyl group. Polyglutamylation plays a key role in microtubule severing by spastin (SPAST). SPAST preferentially recognizes and acts on microtubules decorated with short polyglutamate tails: severing activity by SPAST increases as the number of glutamates per tubulin rises from one to eight, but decreases beyond this glutamylation threshold.

The protein resides in the cytoplasm. The protein localises to the cytoskeleton. It catalyses the reaction GTP + H2O = GDP + phosphate + H(+). In terms of biological role, tubulin is the major constituent of microtubules, a cylinder consisting of laterally associated linear protofilaments composed of alpha- and beta-tubulin heterodimers. Microtubules grow by the addition of GTP-tubulin dimers to the microtubule end, where a stabilizing cap forms. Below the cap, tubulin dimers are in GDP-bound state, owing to GTPase activity of alpha-tubulin. The sequence is that of Tubulin alpha-8 chain from Gallus gallus (Chicken).